Reading from the N-terminus, the 384-residue chain is MAP kinase-activated protein kinase 3 (384 aa).

At methionine 1 the chain carries N-acetylmethionine. The interval 1–33 (MDGETAGEKGSLVPPPGALGGSALGGAPAPGVR) is disordered. The Protein kinase domain occupies 46–306 (QLSKQVLGLG…IMQFMNHPWI (261 aa)). ATP is bound by residues 52-60 (LGLGVNGKV) and lysine 75. Catalysis depends on aspartate 168, which acts as the Proton acceptor. At threonine 203 the chain carries Phosphothreonine; by MAPK14. Residue serine 253 is modified to Phosphoserine; by MAPK14. Serine 309 is modified (phosphoserine; by autocatalysis). Residues 309-345 (SMVVPQTPLYTARVLQEDKDHWDDVKEEMTSALATMR) are autoinhibitory helix. The residue at position 315 (threonine 315) is a Phosphothreonine; by MAPK14. Positions 337-346 (MTSALATMRV) match the Nuclear export signal (NES) motif. Positions 347–371 (DYDQVKIKDLKTSNNRLLNKRRKKQ) are p38 MAPK-binding site. 2 short sequence motifs (bipartite nuclear localization signal) span residues 352 to 355 (KIKD) and 366 to 370 (KRRKK). Residues 359–384 (SNNRLLNKRRKKQAGSSSASQGCNNQ) form a disordered region. Residues 372-384 (AGSSSASQGCNNQ) show a composition bias toward polar residues.

It belongs to the protein kinase superfamily. CAMK Ser/Thr protein kinase family. In terms of assembly, heterodimer with p38-alpha/MAPK14. The heterodimer with p38-alpha/MAPK14 forms a stable complex: molecules are positioned 'face to face' so that the ATP-binding sites of both kinases are at the heterodimer interface. Interacts with TCF3 and with polycomb proteins, such as PCH2 and BMI1/PCGF4. Post-translationally, phosphorylated and activated by MAPK1/ERK2 and MAPK3/ERK1. Phosphorylated and activated by MAP kinase p38-alpha/MAPK14 at Thr-201, Ser-251 and Thr-313. Isoform 3 is degraded following phosphorylation at Thr-203. Ubiquitously expressed (at protein level). Isoform 3 is expressed in skeletal muscles and heart.

Its subcellular location is the nucleus. The protein resides in the cytoplasm. It catalyses the reaction L-seryl-[protein] + ATP = O-phospho-L-seryl-[protein] + ADP + H(+). The catalysed reaction is L-threonyl-[protein] + ATP = O-phospho-L-threonyl-[protein] + ADP + H(+). Its activity is regulated as follows. Activated following phosphorylation by p38-alpha/MAPK14 following various stresses. Inhibited by ligand 5B (2'-[2-(1,3-benzodioxol-5-yl)pyrimidin-4-yl]-5',6'-dihydrospiro[piperidine-4,7'-pyrrolo[3,2-c]pyridin]- 4'(1'h)-one) and ligand P4O (2-[2-(2-fluorophenyl)pyridin-4-yl]-1,5,6,7-tetrahydro- 4h-pyrrolo[3,2-c]pyridin-4-one), 2 ATP-competitive inhibitors. Functionally, stress-activated serine/threonine-protein kinase involved in cytokines production, endocytosis, cell migration, chromatin remodeling and transcriptional regulation. Following stress, it is phosphorylated and activated by MAP kinase p38-alpha/MAPK14, leading to phosphorylation of substrates. Phosphorylates serine in the peptide sequence, Hyd-X-R-X(2)-S, where Hyd is a large hydrophobic residue. MAPKAPK2 and MAPKAPK3, share the same function and substrate specificity, but MAPKAPK3 kinase activity and level in protein expression are lower compared to MAPKAPK2. Phosphorylates HSP27/HSPB1, KRT18, KRT20, RCSD1, RPS6KA3, TAB3 and TTP/ZFP36. Mediates phosphorylation of HSP27/HSPB1 in response to stress, leading to dissociate HSP27/HSPB1 from large small heat-shock protein (sHsps) oligomers and impair their chaperone activities and ability to protect against oxidative stress effectively. Involved in inflammatory response by regulating tumor necrosis factor (TNF) and IL6 production post-transcriptionally: acts by phosphorylating AU-rich elements (AREs)-binding proteins, such as TTP/ZFP36, leading to regulate the stability and translation of TNF and IL6 mRNAs. Phosphorylation of TTP/ZFP36, a major post-transcriptional regulator of TNF, promotes its binding to 14-3-3 proteins and reduces its ARE mRNA affinity leading to inhibition of dependent degradation of ARE-containing transcript. Involved in toll-like receptor signaling pathway (TLR) in dendritic cells: required for acute TLR-induced macropinocytosis by phosphorylating and activating RPS6KA3. Also acts as a modulator of Polycomb-mediated repression. This chain is MAP kinase-activated protein kinase 3 (Mapkapk3), found in Mus musculus (Mouse).